Consider the following 398-residue polypeptide: Cytochrome b (398 aa).

4 consecutive transmembrane segments (helical) span residues 38-58 (FGSL…FLAM), 82-104 (WLLR…LHIF), 119-139 (VWCL…IGYV), and 185-205 (FFSL…LHLA). His88 and His102 together coordinate heme b. Residues His189 and His203 each contribute to the heme b site. His208 contacts a ubiquinone. A run of 4 helical transmembrane segments spans residues 231-251 (FYVK…IWIF), 295-315 (AGGV…PFFK), 327-347 (IYQG…WIGC), and 354-373 (FVTI…AITP).

The protein belongs to the cytochrome b family. As to quaternary structure, the main subunits of complex b-c1 are: cytochrome b, cytochrome c1 and the Rieske protein. Requires heme b as cofactor.

The protein localises to the mitochondrion inner membrane. In terms of biological role, component of the ubiquinol-cytochrome c reductase complex (complex III or cytochrome b-c1 complex) that is part of the mitochondrial respiratory chain. The b-c1 complex mediates electron transfer from ubiquinol to cytochrome c. Contributes to the generation of a proton gradient across the mitochondrial membrane that is then used for ATP synthesis. The sequence is that of Cytochrome b (MT-CYB) from Triticum aestivum (Wheat).